The following is a 332-amino-acid chain: Cysteine and histidine-rich domain-containing protein 1 (332 aa).

Ala-2 carries the post-translational modification N-acetylalanine. An interaction with PPP5C region spans residues 2–77 (ALLCYNRACG…KPPEPVKPEV (76 aa)). 6 residues coordinate Zn(2+): Cys-5, Cys-10, Cys-24, His-27, Cys-42, and Cys-43. CHORD domains follow at residues 5-64 (CYNR…KGRH) and 157-216 (CKNG…KGRH). Thr-47 carries the phosphothreonine modification. Position 51 is a phosphoserine (Ser-51). Zn(2+) is bound by residues Cys-59, His-64, Cys-157, Cys-162, Cys-176, His-179, Cys-194, Cys-195, Cys-211, and His-216. A disordered region spans residues 62–82 (GRHNSEKPPEPVKPEVKTTEK). Over residues 64 to 82 (HNSEKPPEPVKPEVKTTEK) the composition is skewed to basic and acidic residues. An interaction with HSP90AA1 and HSP90AB1 region spans residues 65–316 (NSEKPPEPVK…AEPMQWASLE (252 aa)). One can recognise a CS domain in the interval 227-316 (VVPCRHDWHQ…AEPMQWASLE (90 aa)).

In terms of assembly, interacts with HSP90AA1, HSP90AB1, PPP5C, ROCK1 and ROCK2.

Functionally, regulates centrosome duplication, probably by inhibiting the kinase activity of ROCK2. Proposed to act as co-chaperone for HSP90. May play a role in the regulation of NOD1 via a HSP90 chaperone complex. In vitro, has intrinsic chaperone activity. This function may be achieved by inhibiting association of ROCK2 with NPM1. Plays a role in ensuring the localization of the tyrosine kinase receptor EGFR to the plasma membrane, and thus ensures the subsequent regulation of EGFR activity and EGF-induced actin cytoskeleton remodeling. Involved in stress response. Prevents tumorigenesis. This is Cysteine and histidine-rich domain-containing protein 1 (CHORDC1) from Macaca fascicularis (Crab-eating macaque).